A 195-amino-acid chain; its full sequence is Imidazoleglycerol-phosphate dehydratase (195 aa).

It belongs to the imidazoleglycerol-phosphate dehydratase family.

Its subcellular location is the cytoplasm. It carries out the reaction D-erythro-1-(imidazol-4-yl)glycerol 3-phosphate = 3-(imidazol-4-yl)-2-oxopropyl phosphate + H2O. Its pathway is amino-acid biosynthesis; L-histidine biosynthesis; L-histidine from 5-phospho-alpha-D-ribose 1-diphosphate: step 6/9. The sequence is that of Imidazoleglycerol-phosphate dehydratase from Dinoroseobacter shibae (strain DSM 16493 / NCIMB 14021 / DFL 12).